A 391-amino-acid polypeptide reads, in one-letter code: Extracellular metalloproteinase 3 (391 aa).

Positions His-1–Ser-9 are excised as a propeptide. A glycan (N-linked (GlcNAc...) asparagine) is linked at Asn-173. His-192 contacts Zn(2+). Glu-193 is a catalytic residue. Residue His-196 participates in Zn(2+) binding. N-linked (GlcNAc...) asparagine glycosylation is found at Asn-243 and Asn-385.

It belongs to the peptidase M36 family. It depends on Zn(2+) as a cofactor.

The protein localises to the secreted. Secreted metalloproteinase probably acting as a virulence factor. This chain is Extracellular metalloproteinase 3 (MEP3), found in Trichophyton soudanense.